A 922-amino-acid polypeptide reads, in one-letter code: Lacticin 481/lactococcin biosynthesis protein LcnDR2 (922 aa).

Functionally, could be implicated in the processing or the export process of the lantibiotic lacticin 481/lactococcin DR. The sequence is that of Lacticin 481/lactococcin biosynthesis protein LcnDR2 (lcnDR2) from Lactococcus lactis subsp. lactis (Streptococcus lactis).